The primary structure comprises 488 residues: Transmembrane protein 39A (488 aa).

2 N-linked (GlcNAc...) asparagine glycosylation sites follow: Asn31 and Asn39. 8 consecutive transmembrane segments (helical) span residues Ser72–Ile92, Thr110–Ala130, Val154–Leu174, Ser182–Phe202, Glu287–Val307, Cys319–Pro339, Leu420–Leu440, and Asn446–Leu466.

It belongs to the TMEM39 family. In terms of assembly, interacts with SACM1L, SEC23A and SEC24A.

The protein localises to the endoplasmic reticulum membrane. Functionally, regulates autophagy by controlling the spatial distribution and levels of the intracellular phosphatidylinositol 4-phosphate (PtdIns(4)P) pools. Modulates (PtdIns(4)P) levels by regulating the ER-to-Golgi trafficking of the phosphatidylinositide phosphatase SACM1L. This is Transmembrane protein 39A (TMEM39A) from Bos taurus (Bovine).